The following is a 313-amino-acid chain: Ribosomal RNA small subunit methyltransferase H (313 aa).

S-adenosyl-L-methionine is bound by residues 35-37, D55, F79, D101, and Q108; that span reads GGH.

The protein belongs to the methyltransferase superfamily. RsmH family.

It is found in the cytoplasm. It catalyses the reaction cytidine(1402) in 16S rRNA + S-adenosyl-L-methionine = N(4)-methylcytidine(1402) in 16S rRNA + S-adenosyl-L-homocysteine + H(+). Functionally, specifically methylates the N4 position of cytidine in position 1402 (C1402) of 16S rRNA. This Escherichia coli O127:H6 (strain E2348/69 / EPEC) protein is Ribosomal RNA small subunit methyltransferase H.